Reading from the N-terminus, the 392-residue chain is THO complex subunit MFT1 (392 aa).

2 stretches are compositionally biased toward acidic residues: residues 258 to 271 and 290 to 330; these read DNID…EDEE and NVDE…EVDG. Positions 258-392 are disordered; sequence DNIDEDYESD…SASSSVEEVK (135 aa). Ser266 carries the phosphoserine modification. The segment covering 331 to 344 has biased composition (polar residues); it reads ESSQQEDNSRQGNN. The span at 345–367 shows a compositional bias: acidic residues; that stretch reads EETDKETGVIEEPDAVNDAEEAD. The span at 377–392 shows a compositional bias: polar residues; the sequence is GTTSDFSASSSVEEVK.

In terms of assembly, component of the THO complex, which is composed of HPR1, MFT1, THO2 and THP2. Together with SUB2, TEX1 and YRA1, THO forms the transcription/export (TREX) complex. THO associates with DNA and RNA in vitro.

The protein resides in the nucleus. Component the THO subcomplex of the TREX complex, which operates in coupling transcription elongation to mRNA export. The THO complex is recruited to transcribed genes and moves along the gene with the elongating polymerase during transcription. THO is important for stabilizing nascent RNA in the RNA polymerase II elongation complex by preventing formation of DNA:RNA hybrids behind the elongating polymerase. It functions in cotranscriptional formation of an export-competent messenger ribonucleoprotein particle (mRNP) by facilitating the loading of ATP-dependent RNA helicase SUB2 and the mRNA export factor YRA1 along the nascent mRNA. The chain is THO complex subunit MFT1 (MFT1) from Saccharomyces cerevisiae (strain ATCC 204508 / S288c) (Baker's yeast).